We begin with the raw amino-acid sequence, 142 residues long: Hemoglobin subunit alpha (142 aa).

At Ser-1 the chain carries N-acetylserine. In terms of domain architecture, Globin spans 1–142 (SLTDKDKATV…VSLALSERYR (142 aa)). Position 59 (His-59) interacts with O2. His-88 contacts heme b.

It belongs to the globin family. In terms of assembly, hb1 is a heterotetramer of two alpha chains and two beta-1 chains. Hb2 is a heterotetramer of two alpha chains and two beta-2 chains. In terms of tissue distribution, red blood cells.

Involved in oxygen transport from gills to the various peripheral tissues. This chain is Hemoglobin subunit alpha (hba), found in Pseudaphritis urvillii (Congolli).